A 245-amino-acid chain; its full sequence is MWIGIISLFPEMFKAITEYGVTGRAVRQNLLEIQYWNPRDFTFDKHKTVDDRPYGGGPGMLMMVQPLRDAIHCAKSVAGDGVKVIYLSPQGRKLDQNGVQELARNQKMIFVCGRYEGIDERLIETEIDEEWSIGDYVLTGGELPAMTLIDAVARFVPCVLGKQASAQEDSFAEGLLDCPHYTRPEQLNGLTVPPVLMSGNHEEIRKWRLKQSLQRTWLRRPELLESLALTDEQSKLLSQIKQENS.

Residues Gly113 and Ile133 to Leu138 contribute to the S-adenosyl-L-methionine site.

It belongs to the RNA methyltransferase TrmD family. Homodimer.

Its subcellular location is the cytoplasm. It carries out the reaction guanosine(37) in tRNA + S-adenosyl-L-methionine = N(1)-methylguanosine(37) in tRNA + S-adenosyl-L-homocysteine + H(+). In terms of biological role, specifically methylates guanosine-37 in various tRNAs. The protein is tRNA (guanine-N(1)-)-methyltransferase of Histophilus somni (strain 129Pt) (Haemophilus somnus).